The following is a 74-amino-acid chain: Large ribosomal subunit protein bL28 (74 aa).

This sequence belongs to the bacterial ribosomal protein bL28 family.

This Desulforapulum autotrophicum (strain ATCC 43914 / DSM 3382 / VKM B-1955 / HRM2) (Desulfobacterium autotrophicum) protein is Large ribosomal subunit protein bL28.